The following is a 330-amino-acid chain: Protein IN CHLOROPLAST ATPASE BIOGENESIS, chloroplastic (330 aa).

Residues 1 to 35 (MGSISMHITPSTALPIRHFRARVSCCSSGHVSFIK) constitute a chloroplast transit peptide.

As to quaternary structure, interacts with ATPC1.

It localises to the plastid. The protein localises to the chloroplast stroma. Functionally, involved in the assembly of the F(1) ATP synthase in chloroplast thylakoid membranes. Functions downstream of the CPN60 chaperones to promote assembly of the catalytically active core of the chloroplast ATP synthase. Assists the assembly of the ATP synthase gamma subunit into the active F(1) core downstream of CPN60-mediated folding, which is critical for the biogenesis of the chloroplast ATP synthase. This is Protein IN CHLOROPLAST ATPASE BIOGENESIS, chloroplastic from Arabidopsis thaliana (Mouse-ear cress).